We begin with the raw amino-acid sequence, 535 residues long: Palmdelphin (535 aa).

The stretch at 1–105 forms a coiled coil; the sequence is MEEAELLKER…KEELQVSTKE (105 aa). The interval 423-450 is disordered; the sequence is VVIDDDDDDDDDEEADKKGEENTKESVS. Residues 424 to 436 are compositionally biased toward acidic residues; it reads VIDDDDDDDDDEE. Over residues 437-446 the composition is skewed to basic and acidic residues; the sequence is ADKKGEENTK.

It belongs to the paralemmin family.

Its subcellular location is the cytoplasm. The protein localises to the cell projection. It is found in the dendrite. It localises to the dendritic spine. The chain is Palmdelphin (palmd) from Xenopus laevis (African clawed frog).